A 187-amino-acid chain; its full sequence is Elongation factor P (187 aa).

Belongs to the elongation factor P family.

It localises to the cytoplasm. The protein operates within protein biosynthesis; polypeptide chain elongation. In terms of biological role, involved in peptide bond synthesis. Stimulates efficient translation and peptide-bond synthesis on native or reconstituted 70S ribosomes in vitro. Probably functions indirectly by altering the affinity of the ribosome for aminoacyl-tRNA, thus increasing their reactivity as acceptors for peptidyl transferase. The protein is Elongation factor P of Erythrobacter litoralis (strain HTCC2594).